A 305-amino-acid chain; its full sequence is Tyrosine recombinase XerC (305 aa).

The Core-binding (CB) domain maps to 1 to 94 (MSSVDEFLTY…ACRSYYAWLL (94 aa)). A Tyr recombinase domain is found at 115-292 (KLPQVLDADE…DFQHLAKVYD (178 aa)). Active-site residues include Arg-154, Lys-178, His-244, Arg-247, and His-270. Tyr-279 (O-(3'-phospho-DNA)-tyrosine intermediate) is an active-site residue.

It belongs to the 'phage' integrase family. XerC subfamily. Forms a cyclic heterotetrameric complex composed of two molecules of XerC and two molecules of XerD.

It is found in the cytoplasm. In terms of biological role, site-specific tyrosine recombinase, which acts by catalyzing the cutting and rejoining of the recombining DNA molecules. The XerC-XerD complex is essential to convert dimers of the bacterial chromosome into monomers to permit their segregation at cell division. It also contributes to the segregational stability of plasmids. This chain is Tyrosine recombinase XerC, found in Xanthomonas axonopodis pv. citri (strain 306).